The chain runs to 275 residues: Interleukin-2 receptor subunit alpha (275 aa).

An N-terminal signal peptide occupies residues 1 to 21 (MEPSLLMWRFFVFIVVPGCVT). A Sushi 1 domain is found at 22–81 (EACHDDPPSLRNAMFKVFRYEVGTMINCDCKTGFRRVSAVMRCVGDSSHSAWENRCFCNS). Residues 22–243 (EACHDDPPSL…DTFIFTTEYQ (222 aa)) are Extracellular-facing. 3 disulfides stabilise this stretch: cysteine 24–cysteine 64, cysteine 49–cysteine 77, and cysteine 51–cysteine 79. Residue asparagine 80 is glycosylated (N-linked (GlcNAc...) asparagine). The interval 88 to 130 (QVKQVTPAPEEHREKKHTDAQNQTQPPEEADLPGHCEEPPPWE) is disordered. Basic and acidic residues predominate over residues 96 to 106 (PEEHREKKHTD). Asparagine 109 carries N-linked (GlcNAc...) asparagine glycosylation. A compositionally biased stretch (basic and acidic residues) spans 119–130 (LPGHCEEPPPWE). In terms of domain architecture, Sushi 2 spans 121-186 (GHCEEPPPWE…WTRPRLKCIR (66 aa)). Intrachain disulfides connect cysteine 123-cysteine 168 and cysteine 152-cysteine 184. The disordered stretch occupies residues 188–221 (GEHGQASDDAEPQESTEAPPGSGTFLPTRMAGTT). Residues 244–262 (IAVAGCTLLLASILLLSCL) traverse the membrane as a helical segment. Residues 263–275 (TWQRKWKKNRRTI) are Cytoplasmic-facing.

Non-covalent dimer of an alpha and a beta subunit. IL2R exists in 3 different forms: a high affinity dimer, an intermediate affinity monomer (beta subunit), and a low affinity monomer (alpha subunit). The high and intermediate affinity forms also associate with a gamma subunit.

It localises to the membrane. In terms of biological role, receptor for interleukin-2. The receptor is involved in the regulation of immune tolerance by controlling regulatory T cells (TREGs) activity. TREGs suppress the activation and expansion of autoreactive T-cells. The sequence is that of Interleukin-2 receptor subunit alpha (IL2RA) from Bos taurus (Bovine).